A 1380-amino-acid chain; its full sequence is DNA-directed RNA polymerase subunit beta (1380 aa).

The protein belongs to the RNA polymerase beta chain family. In terms of assembly, the RNAP catalytic core consists of 2 alpha, 1 beta, 1 beta' and 1 omega subunit. When a sigma factor is associated with the core the holoenzyme is formed, which can initiate transcription.

It carries out the reaction RNA(n) + a ribonucleoside 5'-triphosphate = RNA(n+1) + diphosphate. In terms of biological role, DNA-dependent RNA polymerase catalyzes the transcription of DNA into RNA using the four ribonucleoside triphosphates as substrates. This Sinorhizobium fredii (strain NBRC 101917 / NGR234) protein is DNA-directed RNA polymerase subunit beta.